The primary structure comprises 502 residues: MAAPCEGQAFAVGVEKNWGAVVRSPEGTPQKIRQLIDEGIAPEEGGVDAKDTSATSQSVNGSPQAEQPSLESTSKEAFFSRVETFSSLKWAGKPFELSPLVCAKYGWVTVECDMLKCSSCQAFLCASLQPAFDFDRYKQRCAELKKALCTAHEKFCFWPDSPSPDRFGMLPLDEPAILVSEFLDRFQSLCHLDLQLPSLRPEDLKTMCLTEDKISLLLHLLEDELDHRTDERKTTIKLGSDIQVHVTACILSVCGWACSSSLESMQLSLITCSQCMRKVGLWGFQQIESSMTDLDASFGLTSSPIPGLEGRPERLPLVPESPRRMMTRSQDATFSPGSEQAEKSPGPIVSRTRSWDSSSPVDRPEPEAASPTTRTRPVTRSMGTGDTPGLEVPSSPLRKAKRARLCSSSSSDTSSRSFFDPTSQHRDWCPWVNITLGKESRENGGTEPDASAPAEPGWKAVLTILLAHKQSSQPAETDSMSLSEKSRKVFRIFRQWESLCSC.

Ala-2 carries the post-translational modification N-acetylalanine. Ser-24 is subject to Phosphoserine. Residue Thr-28 is modified to Phosphothreonine. The segment at 36–73 (IDEGIAPEEGGVDAKDTSATSQSVNGSPQAEQPSLEST) is disordered. The span at 52–72 (TSATSQSVNGSPQAEQPSLES) shows a compositional bias: polar residues. Residues Ser-58 and Ser-62 each carry the phosphoserine modification. Residue Thr-84 is modified to Phosphothreonine. The C3HC-type zinc-finger motif lies at 102–156 (CAKYGWVTVECDMLKCSSCQAFLCASLQPAFDFDRYKQRCAELKKALCTAHEKFC). The F-box-like stretch occupies residues 170-210 (LPLDEPAILVSEFLDRFQSLCHLDLQLPSLRPEDLKTMCLT). The interval 302–423 (SSPIPGLEGR…SSRSFFDPTS (122 aa)) is disordered. Ser-321 and Ser-329 each carry phosphoserine. The span at 327–338 (TRSQDATFSPGS) shows a compositional bias: polar residues. Thr-333 bears the Phosphothreonine mark. 6 positions are modified to phosphoserine: Ser-335, Ser-338, Ser-344, Ser-354, Ser-359, and Ser-370. Residues 351–360 (RTRSWDSSSP) are compositionally biased toward polar residues. Low complexity predominate over residues 371-380 (PTTRTRPVTR). Ser-381 bears the Phosphoserine mark. 2 positions are modified to phosphothreonine: Thr-384 and Thr-387. Ser-395 is modified (phosphoserine). A Nuclear localization signal motif is present at residues 396–402 (PLRKAKR). Phosphoserine occurs at positions 407 and 483. Residues 407 to 422 (SSSSSDTSSRSFFDPT) show a composition bias toward low complexity.

Interacts with TPR; this interaction mediates ZC3HC1 nuclear envelopes (NE)-association but also required for proper positioning of a substantial amount of TPR at the nuclear basket (NB). Phosphorylated. May also be weakly phosphorylated on Tyr residues. In terms of tissue distribution, widely expressed. Highly expressed in heart, skeletal muscle and testis. Expressed in brain, placenta, lung, kidney, liver, pancreas, spleen, thymus, prostate, ovary small intestine and colon. Weakly or not expressed in leukocytes.

It localises to the nucleus. Its subcellular location is the nucleus envelope. In terms of biological role, required for proper positioning of a substantial amount of TPR at the nuclear basket (NB) through interaction with TPR. The protein is Zinc finger C3HC-type protein 1 of Homo sapiens (Human).